The following is a 334-amino-acid chain: Protein-methionine-sulfoxide reductase catalytic subunit MsrP (334 aa).

Residues 1 to 44 constitute a signal peptide (tat-type signal); that stretch reads MKKNQFLKESDVTAESVFFMKRRQVLKALGISATALSLPHAAHA. Mo-molybdopterin contacts are provided by residues Asn-88, 91–92, Cys-146, Thr-181, Asn-233, Arg-238, and 249–251; these read YE and GIK.

Belongs to the MsrP family. Heterodimer of a catalytic subunit (MsrP) and a heme-binding subunit (MsrQ). Mo-molybdopterin serves as cofactor. In terms of processing, exported by the Tat system. Can also be exported by the Sec system.

The protein localises to the periplasm. It catalyses the reaction L-methionyl-[protein] + a quinone + H2O = L-methionyl-(S)-S-oxide-[protein] + a quinol. The enzyme catalyses L-methionyl-[protein] + a quinone + H2O = L-methionyl-(R)-S-oxide-[protein] + a quinol. Functionally, part of the MsrPQ system that repairs oxidized periplasmic proteins containing methionine sulfoxide residues (Met-O), using respiratory chain electrons. Thus protects these proteins from oxidative-stress damage caused by reactive species of oxygen and chlorine. MsrPQ is essential for the maintenance of envelope integrity under bleach stress, rescuing a wide series of structurally unrelated periplasmic proteins from methionine oxidation, including the primary periplasmic chaperone SurA and the lipoprotein Pal. The catalytic subunit MsrP is non-stereospecific, being able to reduce both (R-) and (S-) diastereoisomers of methionine sulfoxide. Can catalyze the reduction of a variety of substrates in vitro, including dimethyl sulfoxide, trimethylamine N-oxide, phenylmethyl sulfoxide and L-methionine sulfoxide. Cannot reduce cyclic N-oxides. Shows no activity as sulfite oxidase. This Escherichia coli (strain K12) protein is Protein-methionine-sulfoxide reductase catalytic subunit MsrP.